The following is a 396-amino-acid chain: Putative F-box protein At4g22660 (396 aa).

The F-box domain occupies 7–58 (PNTWSDLPLDLLNLVFKRLSFANFRQAKSVCSSWYSASKQSVPKNQIPWLML).

This chain is Putative F-box protein At4g22660, found in Arabidopsis thaliana (Mouse-ear cress).